Here is a 101-residue protein sequence, read N- to C-terminus: Small ribosomal subunit protein uS10 (101 aa).

Belongs to the universal ribosomal protein uS10 family. As to quaternary structure, part of the 30S ribosomal subunit.

Functionally, involved in the binding of tRNA to the ribosomes. In Saccharopolyspora erythraea (strain ATCC 11635 / DSM 40517 / JCM 4748 / NBRC 13426 / NCIMB 8594 / NRRL 2338), this protein is Small ribosomal subunit protein uS10.